Here is a 614-residue protein sequence, read N- to C-terminus: Sodium- and chloride-dependent betaine transporter (614 aa).

Residues 1-44 (MDRKVTVHEDGCPVVSWVPEEGEMMDQKDKDQVKDRGQWTNKME) are Cytoplasmic-facing. A run of 3 helical transmembrane segments spans residues 45–65 (FVLS…FPYL), 73–92 (AFFI…VFFL), and 117–137 (GIGM…IIIL). The Extracellular portion of the chain corresponds to 138–210 (AWALFYLFSS…SGIHDLGSLR (73 aa)). N-linked (GlcNAc...) asparagine glycans are attached at residues Asn-171 and Asn-183. 9 consecutive transmembrane segments (helical) span residues 211–229 (WELA…FCIW), 238–255 (VVYF…ILLI), 291–308 (IFFS…LGSY), 320–341 (IALC…FSIL), 374–393 (MPLS…FLGL), 423–441 (LLIL…LLVT), 458–478 (GICL…VYGA), 499–518 (ISWL…FSLS), and 538–556 (IGWL…FIII). Over 557–614 (TLLKTQGSFKKRLQRLITPDPSLPQPGRRSPQDGSSAQNCSTSPVKQELIAWEKETHL) the chain is Cytoplasmic. Residues 574-600 (TPDPSLPQPGRRSPQDGSSAQNCSTSP) are disordered. A Phosphoserine modification is found at Ser-586. A compositionally biased stretch (polar residues) spans 588-600 (QDGSSAQNCSTSP).

This sequence belongs to the sodium:neurotransmitter symporter (SNF) (TC 2.A.22) family. SLC6A12 subfamily. As to quaternary structure, interacts with LIN7C.

Its subcellular location is the basolateral cell membrane. It localises to the cell membrane. The catalysed reaction is 4-aminobutanoate(out) + chloride(out) + 3 Na(+)(out) = 4-aminobutanoate(in) + chloride(in) + 3 Na(+)(in). It carries out the reaction glycine betaine(out) + 2 chloride(out) + 3 Na(+)(out) = glycine betaine(in) + 2 chloride(in) + 3 Na(+)(in). Transporter that mediates cellular uptake of betaine and GABA in a sodium- and chloride-dependent process. May have a role in regulation of GABAergic transmission in the brain through the reuptake of GABA into presynaptic terminals, as well as in osmotic regulation. Probably also involved in renal and hepatic osmotic regulation. In Rattus norvegicus (Rat), this protein is Sodium- and chloride-dependent betaine transporter (Slc6a12).